Consider the following 376-residue polypeptide: tRNA-specific 2-thiouridylase MnmA (376 aa).

Residues 16-23 and Leu42 each bind ATP; that span reads AMSGGVDS. Residue Cys111 is the Nucleophile of the active site. Cys111 and Cys210 are disulfide-bonded. Residue Gly135 coordinates ATP. An interaction with tRNA region spans residues 158-160; that stretch reads KDQ. Cys210 (cysteine persulfide intermediate) is an active-site residue.

Belongs to the MnmA/TRMU family.

The protein localises to the cytoplasm. It catalyses the reaction S-sulfanyl-L-cysteinyl-[protein] + uridine(34) in tRNA + AH2 + ATP = 2-thiouridine(34) in tRNA + L-cysteinyl-[protein] + A + AMP + diphosphate + H(+). Catalyzes the 2-thiolation of uridine at the wobble position (U34) of tRNA, leading to the formation of s(2)U34. The polypeptide is tRNA-specific 2-thiouridylase MnmA (Streptomyces coelicolor (strain ATCC BAA-471 / A3(2) / M145)).